The chain runs to 174 residues: Solute carrier family 2, facilitated glucose transporter member 4 (174 aa).

At 1-19 (QQIGSEDGEPPQQRVTGTL) the chain is on the cytoplasmic side. The segment at 2 to 8 (QIGSEDG) is interaction with SRFBP1. Serine 5 is modified (phosphoserine). Residues 20-40 (VLAVFSAVLGSLQFGYNIGVI) form a helical membrane-spanning segment. Over 41–76 (NAPQKVIEQSYNETWLGRQGPNGPGSIPPGTLTTLW) the chain is Extracellular. Asparagine 52 carries N-linked (GlcNAc...) asparagine glycosylation. Residues 77–97 (ALSVAIFSVGGMFSSFLLGII) form a helical membrane-spanning segment. The Cytoplasmic portion of the chain corresponds to 98 to 114 (SQWLGRKKAMLFNNTLA). The helical transmembrane segment at 115–135 (VLAGALMGLAKAAASYEMLIL) threads the bilayer. The Extracellular portion of the chain corresponds to 136–137 (GR). A helical transmembrane segment spans residues 138–158 (FLIGAYSGLASGLVPMYVGEI). The Cytoplasmic segment spans residues 159-166 (APTHLRGA). Residues 167-174 (LGTLNQLA) form a helical membrane-spanning segment.

Belongs to the major facilitator superfamily. Sugar transporter (TC 2.A.1.1) family. Glucose transporter subfamily. Binds to DAXX. Interacts via its N-terminus with SRFBP1. Interacts with NDUFA9. Interacts with TRARG1; the interaction is required for proper SLC2A4 recycling after insulin stimulation. Post-translationally, sumoylated. Palmitoylated. Palmitoylation by ZDHHC7 controls the insulin-dependent translocation of GLUT4 to the plasma membrane.

It localises to the cell membrane. The protein localises to the endomembrane system. It is found in the cytoplasm. The protein resides in the perinuclear region. The catalysed reaction is D-glucose(out) = D-glucose(in). Insulin-regulated facilitative glucose transporter, which plays a key role in removal of glucose from circulation. Response to insulin is regulated by its intracellular localization: in the absence of insulin, it is efficiently retained intracellularly within storage compartments in muscle and fat cells. Upon insulin stimulation, translocates from these compartments to the cell surface where it transports glucose from the extracellular milieu into the cell. This is Solute carrier family 2, facilitated glucose transporter member 4 from Sus scrofa (Pig).